Here is a 369-residue protein sequence, read N- to C-terminus: Pyruvate dehydrogenase E1 component subunit alpha (369 aa).

In terms of assembly, heterodimer of an alpha and a beta chain. The cofactor is thiamine diphosphate.

It carries out the reaction N(6)-[(R)-lipoyl]-L-lysyl-[protein] + pyruvate + H(+) = N(6)-[(R)-S(8)-acetyldihydrolipoyl]-L-lysyl-[protein] + CO2. The pyruvate dehydrogenase complex catalyzes the overall conversion of pyruvate to acetyl-CoA and CO(2). It contains multiple copies of three enzymatic components: pyruvate dehydrogenase (E1), dihydrolipoamide acetyltransferase (E2) and lipoamide dehydrogenase (E3). This is Pyruvate dehydrogenase E1 component subunit alpha (pdhA) from Geobacillus stearothermophilus (Bacillus stearothermophilus).